The following is a 146-amino-acid chain: Ribosome-binding factor A (146 aa).

Residues glutamine 122–asparagine 134 show a composition bias toward polar residues. The tract at residues glutamine 122–alanine 146 is disordered. Residues aspartate 135–alanine 146 are compositionally biased toward acidic residues.

This sequence belongs to the RbfA family. Monomer. Binds 30S ribosomal subunits, but not 50S ribosomal subunits or 70S ribosomes.

The protein localises to the cytoplasm. One of several proteins that assist in the late maturation steps of the functional core of the 30S ribosomal subunit. Associates with free 30S ribosomal subunits (but not with 30S subunits that are part of 70S ribosomes or polysomes). Required for efficient processing of 16S rRNA. May interact with the 5'-terminal helix region of 16S rRNA. The polypeptide is Ribosome-binding factor A (Shewanella sp. (strain ANA-3)).